The primary structure comprises 365 residues: MQNNEVLKPAKYFSELEKSVLLALVEKYKYVLECKKSDARTIALKQRTWQALAHEYNSQPSVSLRDFKQLKKCWENIKARTKKIMAHERREKGKLFGPESNSHQALKEKVASMLPEQLYFVQNQPEEERGYNHDTSNQEMDCKRVNLLDLEVLIDEQGKIQTKPFRKVPETNLLCDDGSPPQSIDKAFSNGDLELLIDEQGKIQAEPIRKVPVTDSQCIQGSPSSSLKTESFVVPERDVYEDQNSIANMHSSESSVHSTPIFPSSKLSANRTYGRKPSQNGIFTKMHEEQHHQQMSILQLQLIQMNEVHVAKVQQIERECEMAEEEHRIKMEILNKKKMYWERKLQTITKEWPVASFNRPFPNSP.

The Myb-like domain occupies 13–78 (FSELEKSVLL…QLKKCWENIK (66 aa)). Residues 301 to 337 (QLIQMNEVHVAKVQQIERECEMAEEEHRIKMEILNKK) adopt a coiled-coil conformation.

This sequence belongs to the MSANTD3 family.

The protein is Myb/SANT-like DNA-binding domain-containing protein 3 (msantd3) of Xenopus laevis (African clawed frog).